A 316-amino-acid chain; its full sequence is Ribosomal RNA small subunit methyltransferase H (316 aa).

S-adenosyl-L-methionine contacts are provided by residues 35-37 (GGH), Asp-55, Phe-79, Asp-101, and Gln-108.

Belongs to the methyltransferase superfamily. RsmH family.

Its subcellular location is the cytoplasm. The catalysed reaction is cytidine(1402) in 16S rRNA + S-adenosyl-L-methionine = N(4)-methylcytidine(1402) in 16S rRNA + S-adenosyl-L-homocysteine + H(+). In terms of biological role, specifically methylates the N4 position of cytidine in position 1402 (C1402) of 16S rRNA. The protein is Ribosomal RNA small subunit methyltransferase H of Vibrio proteolyticus (Aeromonas proteolytica).